The following is a 437-amino-acid chain: MSCRFQSSSMSYGGGFGAGSCQLGGGRNISSCSSRFVTGGSAGGYGGGMSCGFGGGAGGGFGGGFGGGFGGSYGGGFGGGFGDFGGVDGGLLSGNEKITMQNLNDRLASYLDKVRALEAANADLEVKIRDWHLKQSPASPERDYSAYYKTIEELRIKILEATTDNNRIILEIDNARLAADDFRLKYENELTLRQSVEADINGLRRVLDELTLAKTDLEMQIESLNEELAYLKKNHEEEMKEFSNQVVGQVNVEMDATPGIDLTRVLAEMREQYEALAEKNRRDAEEWFQTKSAELNKEVSSNAEMIQTSKTEITELRRTLQGLEIELQSQLSMKAGLESTLAETECRYALQLQQIQGLISSIEAQLSELRSEMECQNQEYKMLLDIKTRLEQEIATYRSLLEGQDAKMTGFNSGGNNTTTSNGSPSSNSGRPDFRKY.

The head stretch occupies residues 1-95; that stretch reads MSCRFQSSSM…GVDGGLLSGN (95 aa). Omega-N-methylarginine occurs at positions 27 and 35. The interval 96 to 131 is coil 1A; sequence EKITMQNLNDRLASYLDKVRALEAANADLEVKIRDW. Residues 96-408 form the IF rod domain; that stretch reads EKITMQNLND…SLLEGQDAKM (313 aa). Residues 132–150 are linker 1; the sequence is HLKQSPASPERDYSAYYKT. The coil 1B stretch occupies residues 151 to 242; the sequence is IEELRIKILE…KNHEEEMKEF (92 aa). Residues 243–265 form a linker 12 region; sequence SNQVVGQVNVEMDATPGIDLTRV. Positions 266-404 are coil 2; that stretch reads LAEMREQYEA…ATYRSLLEGQ (139 aa). The tail stretch occupies residues 405 to 437; it reads DAKMTGFNSGGNNTTTSNGSPSSNSGRPDFRKY. The disordered stretch occupies residues 408–437; the sequence is MTGFNSGGNNTTTSNGSPSSNSGRPDFRKY. A compositionally biased stretch (low complexity) spans 409–430; that stretch reads TGFNSGGNNTTTSNGSPSSNSG.

Belongs to the intermediate filament family. Heterotetramer of two type I and two type II keratins. Post-translationally, O-glycosylated; glycans consist of single N-acetylglucosamine residues. In terms of tissue distribution, expressed in tongue epithelia (at protein level). Expressed in upper suprabasal layers of the corneal epithelium (at protein level).

Functionally, type 1 keratin. Maintains postnatal tongue mucosal cell homeostasis and tissue organization in response to mechanical stress, potentially via regulation of the G1/S phase cyclins CCNE1 and CCNE2. The sequence is that of Keratin, type I cytoskeletal 13 (Krt13) from Mus musculus (Mouse).